Consider the following 199-residue polypeptide: ATP-dependent Clp protease proteolytic subunit (199 aa).

Serine 98 serves as the catalytic Nucleophile. Residue histidine 123 is part of the active site.

It belongs to the peptidase S14 family. Fourteen ClpP subunits assemble into 2 heptameric rings which stack back to back to give a disk-like structure with a central cavity, resembling the structure of eukaryotic proteasomes.

The protein localises to the cytoplasm. It catalyses the reaction Hydrolysis of proteins to small peptides in the presence of ATP and magnesium. alpha-casein is the usual test substrate. In the absence of ATP, only oligopeptides shorter than five residues are hydrolyzed (such as succinyl-Leu-Tyr-|-NHMec, and Leu-Tyr-Leu-|-Tyr-Trp, in which cleavage of the -Tyr-|-Leu- and -Tyr-|-Trp bonds also occurs).. Functionally, cleaves peptides in various proteins in a process that requires ATP hydrolysis. Has a chymotrypsin-like activity. Plays a major role in the degradation of misfolded proteins. This Clostridium botulinum (strain Eklund 17B / Type B) protein is ATP-dependent Clp protease proteolytic subunit.